Consider the following 97-residue polypeptide: YcgL domain-containing protein PFLU_1517 (97 aa).

Residues 3–87 (RICSIYRSKK…AEDEYIEHLP (85 aa)) enclose the YcgL domain.

The sequence is that of YcgL domain-containing protein PFLU_1517 from Pseudomonas fluorescens (strain SBW25).